The sequence spans 397 residues: Serpin B10 (397 aa).

The Nuclear localization signal motif lies at lysine 74–lysine 77.

It belongs to the serpin family. Ov-serpin subfamily.

It localises to the nucleus. The protein resides in the cytoplasm. Its function is as follows. Protease inhibitor that may play a role in the regulation of protease activities during hematopoiesis and apoptosis induced by TNF. May regulate protease activities in the cytoplasm and in the nucleus. The sequence is that of Serpin B10 (Serpinb10) from Mus musculus (Mouse).